A 309-amino-acid polypeptide reads, in one-letter code: ATP synthase gamma chain (309 aa).

This sequence belongs to the ATPase gamma chain family. In terms of assembly, F-type ATPases have 2 components, CF(1) - the catalytic core - and CF(0) - the membrane proton channel. CF(1) has five subunits: alpha(3), beta(3), gamma(1), delta(1), epsilon(1). CF(0) has three main subunits: a, b and c.

Its subcellular location is the cell membrane. Its function is as follows. Produces ATP from ADP in the presence of a proton gradient across the membrane. The gamma chain is believed to be important in regulating ATPase activity and the flow of protons through the CF(0) complex. The polypeptide is ATP synthase gamma chain (Mycolicibacterium gilvum (strain PYR-GCK) (Mycobacterium gilvum (strain PYR-GCK))).